A 465-amino-acid polypeptide reads, in one-letter code: Glutamate--tRNA ligase (465 aa).

The short motif at 10–20 is the 'HIGH' region element; it reads PSPTGQLHIGG. Zn(2+) contacts are provided by C99, C101, C126, and E128. The 'KMSKS' region signature appears at 236–240; sequence KLSKR. K239 provides a ligand contact to ATP.

It belongs to the class-I aminoacyl-tRNA synthetase family. Glutamate--tRNA ligase type 1 subfamily. In terms of assembly, monomer. The cofactor is Zn(2+).

Its subcellular location is the cytoplasm. It carries out the reaction tRNA(Glu) + L-glutamate + ATP = L-glutamyl-tRNA(Glu) + AMP + diphosphate. Catalyzes the attachment of glutamate to tRNA(Glu) in a two-step reaction: glutamate is first activated by ATP to form Glu-AMP and then transferred to the acceptor end of tRNA(Glu). The sequence is that of Glutamate--tRNA ligase from Lawsonia intracellularis (strain PHE/MN1-00).